The following is a 405-amino-acid chain: MSSTGSSVSTSGLVLPSTPLAEPGKEVPLVVNTPNRAKPPRHWIDLSIEERVQAVKDFGVPAFRARQISAHVFERWEVDPTQWTDLPKAARQEIADAWFPVLLTKVSQQSCDRGTTVKTLWRLHGGALVESVLMYYPATRHSAARATLCLSSQAGCGMACPFCATGQGGIQRNMSTAEIVSQVLAANRLIAAGEVPGASGRVHNIVFMGMGEPMANYRSVLTAIRTLTADGPDGVGMSARALTLSTVGLVPRIKALTQEGIPVTLAVSLHAPDDELRDELIPVNRRWKVDELLDAAWHYAEKTKRRVSIEYALMKDINDQADRAAVLARQIRRRGDWTWAHVNLIPLNPTPGSRWTASRPEDQDAFVETLERWKIPVTVRDTRGSEIDGACGQLAAVGRSEGLGS.

Positions 1 to 15 are enriched in low complexity; sequence MSSTGSSVSTSGLVL. The segment at 1–34 is disordered; it reads MSSTGSSVSTSGLVLPSTPLAEPGKEVPLVVNTP. Glu130 (proton acceptor) is an active-site residue. The Radical SAM core domain occupies 142–386; sequence SAARATLCLS…VTVRDTRGSE (245 aa). Cys149 and Cys391 are disulfide-bonded. [4Fe-4S] cluster is bound by residues Cys156, Cys160, and Cys163. S-adenosyl-L-methionine contacts are provided by residues 211-212, Ser245, 268-270, and Asn348; these read GE and SLH. Cys391 (S-methylcysteine intermediate) is an active-site residue.

Belongs to the radical SAM superfamily. RlmN family. Requires [4Fe-4S] cluster as cofactor.

It is found in the cytoplasm. It carries out the reaction adenosine(2503) in 23S rRNA + 2 reduced [2Fe-2S]-[ferredoxin] + 2 S-adenosyl-L-methionine = 2-methyladenosine(2503) in 23S rRNA + 5'-deoxyadenosine + L-methionine + 2 oxidized [2Fe-2S]-[ferredoxin] + S-adenosyl-L-homocysteine. The catalysed reaction is adenosine(37) in tRNA + 2 reduced [2Fe-2S]-[ferredoxin] + 2 S-adenosyl-L-methionine = 2-methyladenosine(37) in tRNA + 5'-deoxyadenosine + L-methionine + 2 oxidized [2Fe-2S]-[ferredoxin] + S-adenosyl-L-homocysteine. In terms of biological role, specifically methylates position 2 of adenine 2503 in 23S rRNA and position 2 of adenine 37 in tRNAs. This is Probable dual-specificity RNA methyltransferase RlmN from Cutibacterium acnes (strain DSM 16379 / KPA171202) (Propionibacterium acnes).